The chain runs to 361 residues: Fructose-bisphosphate aldolase (361 aa).

The residue at position 2 (Thr-2) is an N-acetylthreonine. 2 residues coordinate substrate: Arg-56 and Lys-147. Glu-188 acts as the Proton acceptor in catalysis. The active-site Schiff-base intermediate with dihydroxyacetone-P is the Lys-230.

It belongs to the class I fructose-bisphosphate aldolase family. In terms of assembly, homotetramer. Mainly expressed in the heads and partly in the thoraxes of adult flies. As to expression, expressed in all adult tissues. The Alpha-beta mRNA shows strong expression in the abdomens of adults. In terms of tissue distribution, mainly expressed in adult abdominal regions and is also expressed in lesser amounts in other parts of the body. The Beta-gamma mRNA is expressed in adult heads.

It carries out the reaction beta-D-fructose 1,6-bisphosphate = D-glyceraldehyde 3-phosphate + dihydroxyacetone phosphate. It participates in carbohydrate degradation; glycolysis; D-glyceraldehyde 3-phosphate and glycerone phosphate from D-glucose: step 4/4. Functionally, enzyme of the glycolytic pathway. Glycolysis is essential in glial cells but not in neurons; neurons rely on the citric acid cycle for their energy needs, and on lactate and alanine secreted into the hemolymph by glial cells to fuel it. May take part in developmental stage-specific or tissue -specific sugar-phosphate metabolisms. Protein acts on two substrates fructose 1,6-bisphosphate and fructose 1-phosphate (like other class I aldolases). The protein is Fructose-bisphosphate aldolase of Drosophila melanogaster (Fruit fly).